The chain runs to 559 residues: Dihydroxy-acid dehydratase (559 aa).

Aspartate 78 is a Mg(2+) binding site. A [2Fe-2S] cluster-binding site is contributed by cysteine 119. 2 residues coordinate Mg(2+): aspartate 120 and lysine 121. Lysine 121 is subject to N6-carboxylysine. [2Fe-2S] cluster is bound at residue cysteine 192. Glutamate 446 is a binding site for Mg(2+). The active-site Proton acceptor is serine 472.

The protein belongs to the IlvD/Edd family. Homodimer. It depends on [2Fe-2S] cluster as a cofactor. Requires Mg(2+) as cofactor.

The catalysed reaction is (2R)-2,3-dihydroxy-3-methylbutanoate = 3-methyl-2-oxobutanoate + H2O. It catalyses the reaction (2R,3R)-2,3-dihydroxy-3-methylpentanoate = (S)-3-methyl-2-oxopentanoate + H2O. It participates in amino-acid biosynthesis; L-isoleucine biosynthesis; L-isoleucine from 2-oxobutanoate: step 3/4. Its pathway is amino-acid biosynthesis; L-valine biosynthesis; L-valine from pyruvate: step 3/4. Its function is as follows. Functions in the biosynthesis of branched-chain amino acids. Catalyzes the dehydration of (2R,3R)-2,3-dihydroxy-3-methylpentanoate (2,3-dihydroxy-3-methylvalerate) into 2-oxo-3-methylpentanoate (2-oxo-3-methylvalerate) and of (2R)-2,3-dihydroxy-3-methylbutanoate (2,3-dihydroxyisovalerate) into 2-oxo-3-methylbutanoate (2-oxoisovalerate), the penultimate precursor to L-isoleucine and L-valine, respectively. The sequence is that of Dihydroxy-acid dehydratase from Wolinella succinogenes (strain ATCC 29543 / DSM 1740 / CCUG 13145 / JCM 31913 / LMG 7466 / NCTC 11488 / FDC 602W) (Vibrio succinogenes).